The primary structure comprises 311 residues: tRNA-cytidine(32) 2-sulfurtransferase (311 aa).

The PP-loop motif signature appears at 47–52 (SGGKDS). 3 residues coordinate [4Fe-4S] cluster: Cys-122, Cys-125, and Cys-213.

Belongs to the TtcA family. Homodimer. Mg(2+) is required as a cofactor. It depends on [4Fe-4S] cluster as a cofactor.

Its subcellular location is the cytoplasm. It carries out the reaction cytidine(32) in tRNA + S-sulfanyl-L-cysteinyl-[cysteine desulfurase] + AH2 + ATP = 2-thiocytidine(32) in tRNA + L-cysteinyl-[cysteine desulfurase] + A + AMP + diphosphate + H(+). Its pathway is tRNA modification. Its function is as follows. Catalyzes the ATP-dependent 2-thiolation of cytidine in position 32 of tRNA, to form 2-thiocytidine (s(2)C32). The sulfur atoms are provided by the cysteine/cysteine desulfurase (IscS) system. This is tRNA-cytidine(32) 2-sulfurtransferase from Klebsiella pneumoniae (strain 342).